The chain runs to 275 residues: Methylglyoxal reductase DkgA (275 aa).

Tyr-51 (proton donor) is an active-site residue. A substrate-binding site is contributed by His-107. Residue 187–241 participates in NADP(+) binding; that stretch reads SPLAQGGEGVFDQKVIRELADKYGKTPAQIVIRWHLDCGLVVIPKSVTPSRIAEN.

The protein belongs to the aldo/keto reductase family. As to quaternary structure, monomer.

It is found in the cytoplasm. It carries out the reaction hydroxyacetone + NADP(+) = methylglyoxal + NADPH + H(+). Functionally, aldo-keto reductase that significantly contributes to cellular methylglyoxal detoxification by catalyzing the NADPH-dependent conversion of methylglyoxal to acetol. The chain is Methylglyoxal reductase DkgA from Salmonella typhimurium (strain LT2 / SGSC1412 / ATCC 700720).